A 980-amino-acid polypeptide reads, in one-letter code: Alanine--tRNA ligase, mitochondrial (980 aa).

The transit peptide at 1–23 directs the protein to the mitochondrion; it reads MAVALAAAAGKLRRAIGRSCPWQ. ATP-binding positions include arginine 105, histidine 123, tryptophan 205, and 235-237; that span reads LWN. Residues asparagine 237 and aspartate 260 each coordinate L-alanine. Residue glycine 264 coordinates ATP. Residues histidine 627, histidine 631, cysteine 744, and histidine 748 each coordinate Zn(2+).

It belongs to the class-II aminoacyl-tRNA synthetase family. In terms of assembly, monomer. Zn(2+) is required as a cofactor.

It localises to the mitochondrion. It catalyses the reaction tRNA(Ala) + L-alanine + ATP = L-alanyl-tRNA(Ala) + AMP + diphosphate. The enzyme catalyses (S)-lactate + ATP + H(+) = (S)-lactoyl-AMP + diphosphate. It carries out the reaction (S)-lactoyl-AMP + L-lysyl-[protein] = N(6)-[(S)-lactoyl]-L-lysyl-[protein] + AMP + 2 H(+). Functionally, catalyzes the attachment of alanine to tRNA(Ala) in a two-step reaction: alanine is first activated by ATP to form Ala-AMP and then transferred to the acceptor end of tRNA(Ala). Also edits incorrectly charged tRNA(Ala) via its editing domain. In presence of high levels of lactate, also acts as a protein lactyltransferase that mediates lactylation of lysine residues in target proteins, such as CGAS. Acts as an inhibitor of cGAS/STING signaling by catalyzing lactylation of CGAS, preventing the formation of liquid-like droplets in which CGAS is activated. This is Alanine--tRNA ligase, mitochondrial (Aars2) from Mus musculus (Mouse).